The chain runs to 435 residues: Adenylosuccinate synthetase (435 aa).

GTP-binding positions include 11–17 (GDEGKGK) and 39–41 (GHT). Asp-12 (proton acceptor) is an active-site residue. Residues Asp-12 and Gly-39 each coordinate Mg(2+). IMP contacts are provided by residues 12-15 (DEGK), 37-40 (NAGH), Thr-128, Arg-142, Gln-223, Thr-238, and Arg-302. The active-site Proton donor is the His-40. 298–304 (SVTGRPR) serves as a coordination point for substrate. GTP contacts are provided by residues Arg-304, 330-332 (KLD), and 412-414 (STG).

The protein belongs to the adenylosuccinate synthetase family. In terms of assembly, homodimer. Mg(2+) is required as a cofactor.

It is found in the cytoplasm. It carries out the reaction IMP + L-aspartate + GTP = N(6)-(1,2-dicarboxyethyl)-AMP + GDP + phosphate + 2 H(+). Its pathway is purine metabolism; AMP biosynthesis via de novo pathway; AMP from IMP: step 1/2. Its function is as follows. Plays an important role in the de novo pathway of purine nucleotide biosynthesis. Catalyzes the first committed step in the biosynthesis of AMP from IMP. The chain is Adenylosuccinate synthetase from Coxiella burnetii (strain RSA 331 / Henzerling II).